Reading from the N-terminus, the 398-residue chain is Phosphoglycerate kinase (398 aa).

Substrate-binding positions include 24-26 (DFN), arginine 40, 63-66 (HMGR), arginine 122, and arginine 155. ATP-binding positions include lysine 206, glycine 294, glutamate 325, and 354-357 (GGDS).

It belongs to the phosphoglycerate kinase family. As to quaternary structure, monomer.

It localises to the cytoplasm. The enzyme catalyses (2R)-3-phosphoglycerate + ATP = (2R)-3-phospho-glyceroyl phosphate + ADP. Its pathway is carbohydrate degradation; glycolysis; pyruvate from D-glyceraldehyde 3-phosphate: step 2/5. In Picosynechococcus sp. (strain ATCC 27264 / PCC 7002 / PR-6) (Agmenellum quadruplicatum), this protein is Phosphoglycerate kinase.